The chain runs to 308 residues: Tetraacyldisaccharide 4'-kinase (308 aa).

ATP is bound at residue 63–70 (SFGGNGKT).

It belongs to the LpxK family.

The catalysed reaction is a lipid A disaccharide + ATP = a lipid IVA + ADP + H(+). It functions in the pathway glycolipid biosynthesis; lipid IV(A) biosynthesis; lipid IV(A) from (3R)-3-hydroxytetradecanoyl-[acyl-carrier-protein] and UDP-N-acetyl-alpha-D-glucosamine: step 6/6. Its function is as follows. Transfers the gamma-phosphate of ATP to the 4'-position of a tetraacyldisaccharide 1-phosphate intermediate (termed DS-1-P) to form tetraacyldisaccharide 1,4'-bis-phosphate (lipid IVA). The polypeptide is Tetraacyldisaccharide 4'-kinase (Campylobacter jejuni (strain RM1221)).